Reading from the N-terminus, the 1412-residue chain is DNA-directed RNA polymerase subunit beta'' (1412 aa).

4 residues coordinate Zn(2+): Cys-220, Cys-294, Cys-301, and Cys-304.

Belongs to the RNA polymerase beta' chain family. RpoC2 subfamily. In terms of assembly, in plastids the minimal PEP RNA polymerase catalytic core is composed of four subunits: alpha, beta, beta', and beta''. When a (nuclear-encoded) sigma factor is associated with the core the holoenzyme is formed, which can initiate transcription. It depends on Zn(2+) as a cofactor.

It is found in the plastid. The protein resides in the chloroplast. It catalyses the reaction RNA(n) + a ribonucleoside 5'-triphosphate = RNA(n+1) + diphosphate. In terms of biological role, DNA-dependent RNA polymerase catalyzes the transcription of DNA into RNA using the four ribonucleoside triphosphates as substrates. The polypeptide is DNA-directed RNA polymerase subunit beta'' (Chara vulgaris (Common stonewort)).